The primary structure comprises 158 residues: C-type lectin galactose-binding isoform (158 aa).

Positions 1-23 are cleaved as a signal peptide; it reads MGRFLLVTLSLLVMAFFLNGANS. Intrachain disulfides connect Cys-26–Cys-37, Cys-54–Cys-154, and Cys-129–Cys-146. Residues 33–155 form the C-type lectin domain; sequence RNGFCYKVFN…CTALRPFLCQ (123 aa). Ca(2+) contacts are provided by Gln-119, Asp-121, and Glu-127. The Galactose-binding motif lies at 119–121; it reads QPD. Asn-134 is a glycosylation site (N-linked (GlcNAc...) asparagine). The Ca(2+) site is built by Asn-142 and Asp-143.

Belongs to the true venom lectin family. In terms of assembly, dimer. Probably disulfide-linked homodimer. As to expression, expressed by the venom gland.

Its subcellular location is the secreted. Its function is as follows. Galactose-binding lectin that binds to and agglutinates erythrocytes in a calcium-dependent manner. In Pseudechis australis (Mulga snake), this protein is C-type lectin galactose-binding isoform.